A 265-amino-acid polypeptide reads, in one-letter code: Cytochrome c oxidase subunit 3 (265 aa).

7 consecutive transmembrane segments (helical) span residues 16–36 (PWPL…VMYM), 41–61 (GGGT…FVWW), 85–105 (GIIL…WAFF), 138–158 (LILL…LAGL), 162–182 (AVYA…FQGI), 200–220 (FFLA…FLII), and 242–262 (AFYW…IYWW).

The protein belongs to the cytochrome c oxidase subunit 3 family. As to quaternary structure, component of the cytochrome c oxidase (complex IV, CIV), a multisubunit enzyme composed of a catalytic core of 3 subunits and several supernumerary subunits. The complex exists as a monomer or a dimer and forms supercomplexes (SCs) in the inner mitochondrial membrane with ubiquinol-cytochrome c oxidoreductase (cytochrome b-c1 complex, complex III, CIII).

It is found in the mitochondrion inner membrane. The enzyme catalyses 4 Fe(II)-[cytochrome c] + O2 + 8 H(+)(in) = 4 Fe(III)-[cytochrome c] + 2 H2O + 4 H(+)(out). In terms of biological role, component of the cytochrome c oxidase, the last enzyme in the mitochondrial electron transport chain which drives oxidative phosphorylation. The respiratory chain contains 3 multisubunit complexes succinate dehydrogenase (complex II, CII), ubiquinol-cytochrome c oxidoreductase (cytochrome b-c1 complex, complex III, CIII) and cytochrome c oxidase (complex IV, CIV), that cooperate to transfer electrons derived from NADH and succinate to molecular oxygen, creating an electrochemical gradient over the inner membrane that drives transmembrane transport and the ATP synthase. Cytochrome c oxidase is the component of the respiratory chain that catalyzes the reduction of oxygen to water. Electrons originating from reduced cytochrome c in the intermembrane space (IMS) are transferred via the dinuclear copper A center (CU(A)) of subunit 2 and heme A of subunit 1 to the active site in subunit 1, a binuclear center (BNC) formed by heme A3 and copper B (CU(B)). The BNC reduces molecular oxygen to 2 water molecules using 4 electrons from cytochrome c in the IMS and 4 protons from the mitochondrial matrix. This chain is Cytochrome c oxidase subunit 3 (COX3), found in Marchantia polymorpha (Common liverwort).